We begin with the raw amino-acid sequence, 352 residues long: Probable cytosolic iron-sulfur protein assembly protein CIAO1 homolog (352 aa).

WD repeat units follow at residues 14-53 (GHDDRVWNVAWSPQGDMLASCSGDKTVRIWSRRQPRPSEQ), 63-102 (CHTRTIRSVAWSPTGRALATASFDATVAVWELSSGVWEQV), 107-146 (GHENEVKCVAWNPDGRLIATCGRDRSVWIWESMPGREFEC), 152-191 (GHSQDVKAVTWHPSGELLVSAGYDDTIKLWTYDGDEWGCA), 200-240 (GHES…TSTP), 268-306 (HHRRTVFSLDWAPTGLIATGDGDDSILAEEEASGLLTQP), and 319-352 (AHGADVNCVRWNPAEPRLLASCSDDGLIRLWWLR).

This sequence belongs to the WD repeat CIA1 family.

Its function is as follows. Essential component of the cytosolic iron-sulfur (Fe/S) protein assembly machinery. Required for the maturation of extramitochondrial Fe/S proteins. The sequence is that of Probable cytosolic iron-sulfur protein assembly protein CIAO1 homolog from Chlamydomonas reinhardtii (Chlamydomonas smithii).